Reading from the N-terminus, the 149-residue chain is 3-dehydroquinate dehydratase (149 aa).

The active-site Proton acceptor is the tyrosine 26. Substrate-binding residues include asparagine 77, histidine 83, and aspartate 90. Histidine 103 serves as the catalytic Proton donor. Residues 104 to 105 (LS) and arginine 114 contribute to the substrate site.

This sequence belongs to the type-II 3-dehydroquinase family. Homododecamer.

It catalyses the reaction 3-dehydroquinate = 3-dehydroshikimate + H2O. Its pathway is metabolic intermediate biosynthesis; chorismate biosynthesis; chorismate from D-erythrose 4-phosphate and phosphoenolpyruvate: step 3/7. Catalyzes a trans-dehydration via an enolate intermediate. This Psychromonas ingrahamii (strain DSM 17664 / CCUG 51855 / 37) protein is 3-dehydroquinate dehydratase.